The chain runs to 376 residues: MSYTIFSKKKNNQLKEPMFFGQPVNIARYDQQKYKIFEQLIEKQLSFFWRPEEIDLSRDRIDFQNLPDNEKHIFISNLKYQTLLDSIQGRSPNIAFLPIISIPELETWIETWSFSETIHSRSYTHIIRNIVNCPSLVFDDIISNKNIYDRAQNISIYYDELINLTSYWHLLGEGIHLINGKKIHINLRFLKKRLYLCLISVNVLEAIRFYVSFACSFAFAERELMEGNAKIIRLIARDEALHLTGTQHILNLLSNIKNNENMEDVVLECKEEAINIFISAAQQEKKWASYLFKSGSMLGLNKDILCQYIEYITNIRMHAIGFKMPFKKQSNPIPWINDWLTSDNIQIAPQETEISSYLVGQIDSEVSDNEFKKFEL.

Residues D85, E116, and H119 each coordinate Fe cation. Y123 is a catalytic residue. The Fe cation site is built by E205, E239, and H242.

Belongs to the ribonucleoside diphosphate reductase small chain family. In terms of assembly, tetramer of two alpha and two beta subunits. Requires Fe cation as cofactor.

The enzyme catalyses a 2'-deoxyribonucleoside 5'-diphosphate + [thioredoxin]-disulfide + H2O = a ribonucleoside 5'-diphosphate + [thioredoxin]-dithiol. Functionally, provides the precursors necessary for DNA synthesis. Catalyzes the biosynthesis of deoxyribonucleotides from the corresponding ribonucleotides. This Buchnera aphidicola subsp. Acyrthosiphon pisum (strain APS) (Acyrthosiphon pisum symbiotic bacterium) protein is Ribonucleoside-diphosphate reductase subunit beta (nrdB).